The sequence spans 183 residues: Acireductone dioxygenase (183 aa).

Fe(2+)-binding residues include His-95, His-97, Glu-101, and His-139. Residues His-95, His-97, Glu-101, and His-139 each contribute to the Ni(2+) site.

It belongs to the acireductone dioxygenase (ARD) family. Monomer. Requires Fe(2+) as cofactor. It depends on Ni(2+) as a cofactor.

The enzyme catalyses 1,2-dihydroxy-5-(methylsulfanyl)pent-1-en-3-one + O2 = 3-(methylsulfanyl)propanoate + CO + formate + 2 H(+). It carries out the reaction 1,2-dihydroxy-5-(methylsulfanyl)pent-1-en-3-one + O2 = 4-methylsulfanyl-2-oxobutanoate + formate + 2 H(+). It participates in amino-acid biosynthesis; L-methionine biosynthesis via salvage pathway; L-methionine from S-methyl-5-thio-alpha-D-ribose 1-phosphate: step 5/6. Functionally, catalyzes 2 different reactions between oxygen and the acireductone 1,2-dihydroxy-3-keto-5-methylthiopentene (DHK-MTPene) depending upon the metal bound in the active site. Fe-containing acireductone dioxygenase (Fe-ARD) produces formate and 2-keto-4-methylthiobutyrate (KMTB), the alpha-ketoacid precursor of methionine in the methionine recycle pathway. Ni-containing acireductone dioxygenase (Ni-ARD) produces methylthiopropionate, carbon monoxide and formate, and does not lie on the methionine recycle pathway. This chain is Acireductone dioxygenase, found in Aquifex aeolicus (strain VF5).